Reading from the N-terminus, the 407-residue chain is Monooxygenase 2 (407 aa).

Belongs to the 3-hydroxybenzoate 6-hydroxylase family. Monomer. FAD serves as cofactor. As to expression, expressed in seeds, seedlings, roots, leaves, flowers, pollen and siliques.

In Arabidopsis thaliana (Mouse-ear cress), this protein is Monooxygenase 2.